The following is a 418-amino-acid chain: Sprouty-related, EVH1 domain-containing protein 2 (418 aa).

The WH1 domain maps to 5–122; that stretch reads THPDDDSYIV…RGVRKAIEDL (118 aa). Residues 127–171 are disordered; sequence TTSSSTIHNEAELGDDDVFTTATDSSSNSSQKREQPTRTISSPTS. Positions 146-156 are enriched in polar residues; that stretch reads TTATDSSSNSS. The KBD domain occupies 201 to 257; sequence PYRQVSFPDDDEEIVRINPREKIWMTGYEDYRHAPVRGKYPDPSEDADSSYVRFAKG. Position 206 is a phosphoserine (S206). 2 positions are modified to phosphotyrosine: Y228 and Y231. The interval 275 to 302 is disordered; that stretch reads GLGEDPKGRGGSVIKTQPSRGKSRRRKE. The SPR domain occupies 308–416; sequence RCVYCRDMFN…CRCCGGKHKA (109 aa).

As to quaternary structure, homodimer and heterodimer. Able to interact with SPRED1 to form heterodimers. Interacts with RAS. May interact with ZDHHC13 (via ANK repeats) and ZDHHC17 (via ANK repeats). Interacts with TESK1. Interacts with NF1. Post-translationally, phosphorylated on serine and threonine residues. Phosphorylated on tyrosine. Phosphorylation of Tyr-228 and Tyr-231 are required for ubiquitination. Ubiquitinated; leading to degradation by the proteasome. As to expression, expressed in liver, skin, small intestine, salivary gland and prostate.

The protein localises to the cell membrane. Its subcellular location is the cytoplasmic vesicle. It is found in the secretory vesicle membrane. The protein resides in the cytoplasm. Functionally, negatively regulates Ras signaling pathways and downstream activation of MAP kinases. Recruits and translocates NF1 to the cell membrane, thereby enabling NF1-dependent hydrolysis of active GTP-bound Ras to inactive GDP-bound Ras. Inhibits fibroblast growth factor (FGF)-induced retinal lens fiber differentiation, probably by inhibiting FGF-mediated phosphorylation of ERK1/2. Inhibits TGFB-induced epithelial-to-mesenchymal transition in lens epithelial cells. The polypeptide is Sprouty-related, EVH1 domain-containing protein 2 (SPRED2) (Homo sapiens (Human)).